The chain runs to 268 residues: Thiazole synthase (268 aa).

The active-site Schiff-base intermediate with DXP is Lys108. Residues Gly169, Ala195–Gly196, and Asn217–Ser218 contribute to the 1-deoxy-D-xylulose 5-phosphate site. The tract at residues Arg248–Asn268 is disordered. Positions Ala255 to Asn268 are enriched in polar residues.

This sequence belongs to the ThiG family. Homotetramer. Forms heterodimers with either ThiH or ThiS.

The protein localises to the cytoplasm. The catalysed reaction is [ThiS sulfur-carrier protein]-C-terminal-Gly-aminoethanethioate + 2-iminoacetate + 1-deoxy-D-xylulose 5-phosphate = [ThiS sulfur-carrier protein]-C-terminal Gly-Gly + 2-[(2R,5Z)-2-carboxy-4-methylthiazol-5(2H)-ylidene]ethyl phosphate + 2 H2O + H(+). It participates in cofactor biosynthesis; thiamine diphosphate biosynthesis. In terms of biological role, catalyzes the rearrangement of 1-deoxy-D-xylulose 5-phosphate (DXP) to produce the thiazole phosphate moiety of thiamine. Sulfur is provided by the thiocarboxylate moiety of the carrier protein ThiS. In vitro, sulfur can be provided by H(2)S. The polypeptide is Thiazole synthase (Prochlorococcus marinus (strain NATL1A)).